A 412-amino-acid polypeptide reads, in one-letter code: Hyaluronidase-3 (412 aa).

An N-terminal signal peptide occupies residues 1–22 (MITQLGLTLVVGLTLCLVHVQA). Intrachain disulfides connect Cys42-Cys332, Cys206-Cys221, Cys357-Cys368, Cys362-Cys396, and Cys398-Cys407. Asn69 is a glycosylation site (N-linked (GlcNAc...) asparagine). The active-site Proton donor is Glu129. Residue Asn216 is glycosylated (N-linked (GlcNAc...) asparagine). The EGF-like domain maps to 353–408 (AATACSHQRCHGHGRCSWKDPGQMEAFLHLQPDDNLGAWKSFRCRCYLGWSGPTCL).

Belongs to the glycosyl hydrolase 56 family. N-glycosylated.

The protein localises to the secreted. It localises to the cell membrane. The protein resides in the cytoplasmic vesicle. It is found in the secretory vesicle. Its subcellular location is the acrosome. The protein localises to the endoplasmic reticulum. It localises to the early endosome. The enzyme catalyses Random hydrolysis of (1-&gt;4)-linkages between N-acetyl-beta-D-glucosamine and D-glucuronate residues in hyaluronate.. In terms of biological role, facilitates sperm penetration into the layer of cumulus cells surrounding the egg by digesting hyaluronic acid. Involved in induction of the acrosome reaction in the sperm. Involved in follicular atresia, the breakdown of immature ovarian follicles that are not selected to ovulate. Induces ovarian granulosa cell apoptosis, possibly via apoptotic signaling pathway involving CASP8 and CASP3 activation, and poly(ADP-ribose) polymerase (PARP) cleavage. Has no hyaluronidase activity in embryonic fibroblasts in vitro. Has no hyaluronidase activity in granulosa cells in vitro. This Rattus norvegicus (Rat) protein is Hyaluronidase-3 (Hyal3).